Consider the following 554-residue polypeptide: (Z)-gamma-bisabolene synthase 1 (554 aa).

Mg(2+)-binding residues include Asp-306, Asp-310, Asp-450, and Asp-458. The DDXXD motif signature appears at 306 to 310; that stretch reads DDACD.

It belongs to the terpene synthase family. Tpsa subfamily. Mg(2+) serves as cofactor. Mn(2+) is required as a cofactor. In terms of tissue distribution, predominantly expressed in roots. Expressed in the cortex and the sub-epidermal layers of roots. Also detected in leaf hydathodes and flower stigmata.

The protein resides in the cytoplasm. It carries out the reaction (2E,6E)-farnesyl diphosphate = (Z)-gamma-bisabolene + diphosphate. Its pathway is secondary metabolite biosynthesis; terpenoid biosynthesis. Involved in sesquiterpene (C15) biosynthesis. The major product is (Z)-gamma-bisabolene with minor amounts of (E)-nerolidol and alpha-bisabolol. The sequence is that of (Z)-gamma-bisabolene synthase 1 (TPS12) from Arabidopsis thaliana (Mouse-ear cress).